A 197-amino-acid polypeptide reads, in one-letter code: uncharacterized protein (197 aa).

A signal peptide spans 1-19 (MKLASLLVGSLMLAVPALA).

The protein resides in the secreted. This is an uncharacterized protein from Arthroderma benhamiae (strain ATCC MYA-4681 / CBS 112371) (Trichophyton mentagrophytes).